The primary structure comprises 1172 residues: Thrombospondin-2 (1172 aa).

An N-terminal signal peptide occupies residues 1–18 (MLWALALLALGIGPRASA). The region spanning 19-215 (GDHVKDTSFD…LQNVHLVFAD (197 aa)) is the Laminin G-like domain. The tract at residues 19 to 232 (GDHVKDTSFD…KKGCQHSQGA (214 aa)) is heparin-binding. 3 N-linked (GlcNAc...) asparagine glycosylation sites follow: Asn-151, Asn-316, and Asn-330. Residues 318–375 (SACVQEGRIFAENETWVVDSCTTCTCKKFKTVCHQITCSPATCANPSFVEGECCPSCS) form the VWFC domain. 3 TSP type-1 domains span residues 381–431 (DEGW…GKCD), 437–492 (NGGW…DPCP), and 494–549 (DGRW…RSCP). 27 cysteine pairs are disulfide-bonded: Cys-393–Cys-425, Cys-397–Cys-430, Cys-408–Cys-415, Cys-449–Cys-486, Cys-453–Cys-491, Cys-464–Cys-476, Cys-506–Cys-543, Cys-510–Cys-548, Cys-521–Cys-533, Cys-553–Cys-564, Cys-558–Cys-574, Cys-577–Cys-588, Cys-594–Cys-610, Cys-601–Cys-619, Cys-622–Cys-646, Cys-652–Cys-665, Cys-659–Cys-678, Cys-680–Cys-691, Cys-707–Cys-715, Cys-720–Cys-740, Cys-756–Cys-776, Cys-779–Cys-799, Cys-815–Cys-835, Cys-838–Cys-858, Cys-876–Cys-896, Cys-912–Cys-932, and Cys-948–Cys-1169. Asn-457 is a glycosylation site (N-linked (GlcNAc...) asparagine). Positions 549–589 (PIDGCLSNPCFPGAKCNSFPDGSWSCGSCPVGFLGNGTHCE) constitute an EGF-like 1 domain. The N-linked (GlcNAc...) asparagine glycan is linked to Asn-584. In terms of domain architecture, EGF-like 2 spans 648–692 (PENPCKDKTHSCHKNAECIYLGHFSDPMYKCECQIGYAGDGLICG). TSP type-3 repeat units follow at residues 693-728 (EDSDLDGWPNNNLVCATNATYHCIKDNCPKLPNSGQ), 729-764 (EDFDKDGIGDACDEDDDNDGVSDEKDNCQLLFNPRQ), 765-787 (LDYDKDEVGDRCDNCPYVHNPAQ), 788-823 (IDTDNNGEGDACSVDIDGDDVFNERDNCPYVYNTDQ), 824-846 (RDTDGDGVGDHCDNCPLMHNPDQ), 847-884 (IDQDNDLVGDQCDNNEDIDDDGHQNNQDNCPYISNSNQ), 885-920 (ADHDNDGKGDACDSDDDNDGVPDDRDNCRLVFNPDQ), and 921-956 (EDSDGDGRGDICKDDFDNDNVPDIDDVCPENNAITE). Asn-710 carries N-linked (GlcNAc...) asparagine glycosylation. Residues 727 to 752 (GQEDFDKDGIGDACDEDDDNDGVSDE) are disordered. Residues 739-749 (ACDEDDDNDGV) are compositionally biased toward acidic residues. Residues 846–938 (QIDQDNDLVG…GDICKDDFDN (93 aa)) are disordered. The segment covering 847–866 (IDQDNDLVGDQCDNNEDIDD) has biased composition (acidic residues). A compositionally biased stretch (polar residues) spans 870-884 (QNNQDNCPYISNSNQ). The span at 885-895 (ADHDNDGKGDA) shows a compositional bias: basic and acidic residues. The span at 896 to 905 (CDSDDDNDGV) shows a compositional bias: acidic residues. The segment covering 925–935 (GDGRGDICKDD) has biased composition (basic and acidic residues). The Cell attachment site signature appears at 928 to 930 (RGD). Residues 960-1172 (RNFQMVPLDP…SDLKYECRDA (213 aa)) form the TSP C-terminal domain. Residue Asn-1069 is glycosylated (N-linked (GlcNAc...) asparagine).

Belongs to the thrombospondin family. In terms of assembly, homotrimer; disulfide-linked. Can bind to fibrinogen, fibronectin, laminin and type V collagen. Interacts (via the TSP type I repeats) with CD36; the interaction conveys an antiangiogenic effect. Interacts (via the TSP type I repeats) with HRG; the interaction blocks the antiangiogenic effect of THBS2 with CD36. Can bind to fibrinogen, fibronectin, laminin.

Adhesive glycoprotein that mediates cell-to-cell and cell-to-matrix interactions. Ligand for CD36 mediating antiangiogenic properties. In Mus musculus (Mouse), this protein is Thrombospondin-2 (Thbs2).